A 260-amino-acid polypeptide reads, in one-letter code: Carbonic anhydrase 2 (260 aa).

N-acetylserine is present on serine 2. Serine 2 bears the Phosphoserine mark. An Alpha-carbonic anhydrase domain is found at 3 to 259 (HHWGYGKHNG…LKGRQVKASF (257 aa)). Residue histidine 64 is the Proton donor/acceptor of the active site. Positions 94, 96, and 119 each coordinate Zn(2+). Phosphoserine occurs at positions 165 and 172. 198 to 199 (TT) provides a ligand contact to substrate.

This sequence belongs to the alpha-carbonic anhydrase family. Interacts with SLC4A4 and SLC26A6. Interaction with SLC4A7 regulates SLC4A7 transporter activity. It depends on Zn(2+) as a cofactor.

The protein resides in the cytoplasm. It localises to the cell membrane. The enzyme catalyses hydrogencarbonate + H(+) = CO2 + H2O. It carries out the reaction urea = cyanamide + H2O. Inhibited by acetazolamide. Catalyzes the reversible hydration of carbon dioxide. Can also hydrate cyanamide to urea. Involved in the regulation of fluid secretion into the anterior chamber of the eye. Essential for bone resorption and osteoclast differentiation. Contributes to intracellular pH regulation in the duodenal upper villous epithelium during proton-coupled peptide absorption. Stimulates the chloride-bicarbonate exchange activity of SLC26A6. This Oryctolagus cuniculus (Rabbit) protein is Carbonic anhydrase 2 (CA2).